The following is a 388-amino-acid chain: Alanine racemase 1 (388 aa).

Lys40 functions as the Proton acceptor; specific for D-alanine in the catalytic mechanism. The residue at position 40 (Lys40) is an N6-(pyridoxal phosphate)lysine. Arg138 contacts substrate. The active-site Proton acceptor; specific for L-alanine is the Tyr268. Met316 contacts substrate.

The protein belongs to the alanine racemase family. Requires pyridoxal 5'-phosphate as cofactor.

It catalyses the reaction L-alanine = D-alanine. It functions in the pathway amino-acid biosynthesis; D-alanine biosynthesis; D-alanine from L-alanine: step 1/1. Catalyzes the interconversion of L-alanine and D-alanine. May also act on other amino acids. The sequence is that of Alanine racemase 1 (alr1) from Caldanaerobacter subterraneus subsp. tengcongensis (strain DSM 15242 / JCM 11007 / NBRC 100824 / MB4) (Thermoanaerobacter tengcongensis).